Consider the following 594-residue polypeptide: UvrABC system protein C (594 aa).

Residues aspartate 14–isoleucine 91 enclose the GIY-YIG domain. A UVR domain is found at lysine 196–isoleucine 231.

This sequence belongs to the UvrC family. In terms of assembly, interacts with UvrB in an incision complex.

Its subcellular location is the cytoplasm. The UvrABC repair system catalyzes the recognition and processing of DNA lesions. UvrC both incises the 5' and 3' sides of the lesion. The N-terminal half is responsible for the 3' incision and the C-terminal half is responsible for the 5' incision. This chain is UvrABC system protein C, found in Bacillus mycoides (strain KBAB4) (Bacillus weihenstephanensis).